The following is a 344-amino-acid chain: Adenosine deaminase (344 aa).

Residues histidine 14 and histidine 16 each coordinate Zn(2+). Substrate contacts are provided by histidine 16, aspartate 18, and glycine 177. Residue histidine 204 coordinates Zn(2+). The active-site Proton donor is the glutamate 207. Aspartate 284 is a Zn(2+) binding site.

It belongs to the metallo-dependent hydrolases superfamily. Adenosine and AMP deaminases family. Adenosine deaminase subfamily. Requires Zn(2+) as cofactor.

It carries out the reaction adenosine + H2O + H(+) = inosine + NH4(+). It catalyses the reaction 2'-deoxyadenosine + H2O + H(+) = 2'-deoxyinosine + NH4(+). Its function is as follows. Catalyzes the hydrolytic deamination of adenosine and 2-deoxyadenosine. The polypeptide is Adenosine deaminase (Haemophilus ducreyi (strain 35000HP / ATCC 700724)).